A 707-amino-acid chain; its full sequence is Anti-sigma-I factor RsgI9 (707 aa).

Residues 1–149 (MKITGVIVRI…NFSRISNIKN (149 aa)) lie on the Cytoplasmic side of the membrane. Residues 3–50 (ITGVIVRIHKDRAIIRTDDNRLLAVKRHNDMMVGQIVSFDANEVHKVE) enclose the RsgI N-terminal anti-sigma domain. A helical membrane pass occupies residues 150-172 (FSRIASIAAAFVLIFLFGRNVML). The Extracellular segment spans residues 173 to 707 (NNSSDSEYAY…DSEEKKEYIQ (535 aa)). Residues 256 to 283 (NDKNKKTRDKREEKIDELKETIEQGIEA) adopt a coiled-coil conformation. Residues 345–392 (EDNTELAPTPTPVPPETPEPTPTPTASEATPSNSPVESKSPEAVPELG) are disordered. Residues 353-367 (TPTPVPPETPEPTPT) show a composition bias toward pro residues. Residues 368-379 (PTASEATPSNSP) show a composition bias toward low complexity.

The protein resides in the cell membrane. The chain is Anti-sigma-I factor RsgI9 from Acetivibrio thermocellus (strain ATCC 27405 / DSM 1237 / JCM 9322 / NBRC 103400 / NCIMB 10682 / NRRL B-4536 / VPI 7372) (Clostridium thermocellum).